A 253-amino-acid polypeptide reads, in one-letter code: Phycoerythrobilin:ferredoxin oxidoreductase (253 aa).

Belongs to the HY2 family.

The catalysed reaction is (3Z)-phycoerythrobilin + oxidized 2[4Fe-4S]-[ferredoxin] = 15,16-dihydrobiliverdin + reduced 2[4Fe-4S]-[ferredoxin] + 2 H(+). Functionally, catalyzes the two-electron reduction of the C2 and C3(1) diene system of 15,16-dihydrobiliverdin. The polypeptide is Phycoerythrobilin:ferredoxin oxidoreductase (pebB) (Prochlorococcus marinus (strain MIT 9215)).